The following is a 306-amino-acid chain: UDP-3-O-acyl-N-acetylglucosamine deacetylase (306 aa).

3 residues coordinate Zn(2+): histidine 79, histidine 238, and aspartate 242. Residue histidine 265 is the Proton donor of the active site.

Belongs to the LpxC family. Zn(2+) is required as a cofactor.

The enzyme catalyses a UDP-3-O-[(3R)-3-hydroxyacyl]-N-acetyl-alpha-D-glucosamine + H2O = a UDP-3-O-[(3R)-3-hydroxyacyl]-alpha-D-glucosamine + acetate. It participates in glycolipid biosynthesis; lipid IV(A) biosynthesis; lipid IV(A) from (3R)-3-hydroxytetradecanoyl-[acyl-carrier-protein] and UDP-N-acetyl-alpha-D-glucosamine: step 2/6. In terms of biological role, catalyzes the hydrolysis of UDP-3-O-myristoyl-N-acetylglucosamine to form UDP-3-O-myristoylglucosamine and acetate, the committed step in lipid A biosynthesis. This Shewanella sp. (strain W3-18-1) protein is UDP-3-O-acyl-N-acetylglucosamine deacetylase.